We begin with the raw amino-acid sequence, 297 residues long: TGF-beta receptor type-2 (297 aa).

A signal peptide spans 1–23 (MGRGLLGGLWPLHVVLWTRIAST). Residues 24–166 (IPPHVPKSVN…NPDLLLVIFQ (143 aa)) lie on the Extracellular side of the membrane. Cystine bridges form between Cys51/Cys84, Cys54/Cys71, Cys61/Cys67, Cys77/Cys101, Cys121/Cys136, and Cys138/Cys143. Asn70 and Asn94 each carry an N-linked (GlcNAc...) asparagine glycan. Residues 167 to 187 (VTGVSLLPPLGIAIAVIITFY) form a helical membrane-spanning segment. Residues 188–297 (CYRVHRQQKL…KTEKDIFSDL (110 aa)) are Cytoplasmic-facing. Residues 244 to 297 (IELDTLVGKGRFAEVYKAKLRQNTSEQFETVAVKIFPYEEYASWKTEKDIFSDL) form the Protein kinase domain. ATP-binding positions include 250–258 (VGKGRFAEV) and Lys277.

It belongs to the protein kinase superfamily. TKL Ser/Thr protein kinase family. TGFB receptor subfamily. As to quaternary structure, homodimer. Heterohexamer; TGFB1, TGFB2 and TGFB3 homodimeric ligands assemble a functional receptor composed of two TGFBR1 and TGFBR2 heterodimers to form a ligand-receptor heterohexamer. The respective affinity of TGFRB1 and TGFRB2 for the ligands may modulate the kinetics of assembly of the receptor and may explain the different biological activities of TGFB1, TGFB2 and TGFB3. Component of a complex composed of TSC22D1 (via N-terminus), TGFBR1 and TGFBR2; the interaction between TSC22D1 and TGFBR1 is inhibited by SMAD7 and promoted by TGFB1. Interacts with DAXX. Interacts with DYNLT4. Interacts with ZFYVE9; ZFYVE9 recruits SMAD2 and SMAD3 to the TGF-beta receptor. Interacts with and is activated by SCUBE3; this interaction does not affect TGFB1-binding to TGFBR2. Interacts with VPS39; this interaction is independent of the receptor kinase activity and of the presence of TGF-beta. Interacts with CLU. The cofactor is Mg(2+). It depends on Mn(2+) as a cofactor. In terms of processing, phosphorylated on a Ser/Thr residue in the cytoplasmic domain.

Its subcellular location is the cell membrane. It localises to the membrane raft. It carries out the reaction L-threonyl-[receptor-protein] + ATP = O-phospho-L-threonyl-[receptor-protein] + ADP + H(+). The catalysed reaction is L-seryl-[receptor-protein] + ATP = O-phospho-L-seryl-[receptor-protein] + ADP + H(+). In terms of biological role, transmembrane serine/threonine kinase forming with the TGF-beta type I serine/threonine kinase receptor, TGFBR1, the non-promiscuous receptor for the TGF-beta cytokines TGFB1, TGFB2 and TGFB3. Transduces the TGFB1, TGFB2 and TGFB3 signal from the cell surface to the cytoplasm and is thus regulating a plethora of physiological and pathological processes including cell cycle arrest in epithelial and hematopoietic cells, control of mesenchymal cell proliferation and differentiation, wound healing, extracellular matrix production, immunosuppression and carcinogenesis. The formation of the receptor complex composed of 2 TGFBR1 and 2 TGFBR2 molecules symmetrically bound to the cytokine dimer results in the phosphorylation and the activation of TGFRB1 by the constitutively active TGFBR2. Activated TGFBR1 phosphorylates SMAD2 which dissociates from the receptor and interacts with SMAD4. The SMAD2-SMAD4 complex is subsequently translocated to the nucleus where it modulates the transcription of the TGF-beta-regulated genes. This constitutes the canonical SMAD-dependent TGF-beta signaling cascade. Also involved in non-canonical, SMAD-independent TGF-beta signaling pathways. The protein is TGF-beta receptor type-2 (TGFBR2) of Sus scrofa (Pig).